A 381-amino-acid polypeptide reads, in one-letter code: Queuine tRNA-ribosyltransferase (381 aa).

Residue aspartate 92 is the Proton acceptor of the active site. Residues 92–96 (DSGGF), aspartate 146, glutamine 190, and glycine 217 each bind substrate. The interval 248-254 (GVGRPED) is RNA binding. Aspartate 267 (nucleophile) is an active-site residue. The RNA binding; important for wobble base 34 recognition stretch occupies residues 272–276 (TRNAR). Positions 305, 307, 310, and 337 each coordinate Zn(2+).

It belongs to the queuine tRNA-ribosyltransferase family. In terms of assembly, homodimer. Within each dimer, one monomer is responsible for RNA recognition and catalysis, while the other monomer binds to the replacement base PreQ1. Zn(2+) serves as cofactor.

It carries out the reaction 7-aminomethyl-7-carbaguanine + guanosine(34) in tRNA = 7-aminomethyl-7-carbaguanosine(34) in tRNA + guanine. It functions in the pathway tRNA modification; tRNA-queuosine biosynthesis. Functionally, catalyzes the base-exchange of a guanine (G) residue with the queuine precursor 7-aminomethyl-7-deazaguanine (PreQ1) at position 34 (anticodon wobble position) in tRNAs with GU(N) anticodons (tRNA-Asp, -Asn, -His and -Tyr). Catalysis occurs through a double-displacement mechanism. The nucleophile active site attacks the C1' of nucleotide 34 to detach the guanine base from the RNA, forming a covalent enzyme-RNA intermediate. The proton acceptor active site deprotonates the incoming PreQ1, allowing a nucleophilic attack on the C1' of the ribose to form the product. After dissociation, two additional enzymatic reactions on the tRNA convert PreQ1 to queuine (Q), resulting in the hypermodified nucleoside queuosine (7-(((4,5-cis-dihydroxy-2-cyclopenten-1-yl)amino)methyl)-7-deazaguanosine). The sequence is that of Queuine tRNA-ribosyltransferase from Xanthomonas oryzae pv. oryzae (strain MAFF 311018).